Consider the following 219-residue polypeptide: Thiamine-phosphate synthase (219 aa).

Residues 44-48 and N79 each bind 4-amino-2-methyl-5-(diphosphooxymethyl)pyrimidine; that span reads QFREK. Mg(2+)-binding residues include D80 and D99. S117 is a 4-amino-2-methyl-5-(diphosphooxymethyl)pyrimidine binding site. Residue 143–145 participates in 2-[(2R,5Z)-2-carboxy-4-methylthiazol-5(2H)-ylidene]ethyl phosphate binding; it reads TST. K146 is a binding site for 4-amino-2-methyl-5-(diphosphooxymethyl)pyrimidine. Residues G175 and 195–196 contribute to the 2-[(2R,5Z)-2-carboxy-4-methylthiazol-5(2H)-ylidene]ethyl phosphate site; that span reads IS.

The protein belongs to the thiamine-phosphate synthase family. Mg(2+) serves as cofactor.

It carries out the reaction 2-[(2R,5Z)-2-carboxy-4-methylthiazol-5(2H)-ylidene]ethyl phosphate + 4-amino-2-methyl-5-(diphosphooxymethyl)pyrimidine + 2 H(+) = thiamine phosphate + CO2 + diphosphate. The enzyme catalyses 2-(2-carboxy-4-methylthiazol-5-yl)ethyl phosphate + 4-amino-2-methyl-5-(diphosphooxymethyl)pyrimidine + 2 H(+) = thiamine phosphate + CO2 + diphosphate. It catalyses the reaction 4-methyl-5-(2-phosphooxyethyl)-thiazole + 4-amino-2-methyl-5-(diphosphooxymethyl)pyrimidine + H(+) = thiamine phosphate + diphosphate. It functions in the pathway cofactor biosynthesis; thiamine diphosphate biosynthesis; thiamine phosphate from 4-amino-2-methyl-5-diphosphomethylpyrimidine and 4-methyl-5-(2-phosphoethyl)-thiazole: step 1/1. In terms of biological role, condenses 4-methyl-5-(beta-hydroxyethyl)thiazole monophosphate (THZ-P) and 2-methyl-4-amino-5-hydroxymethyl pyrimidine pyrophosphate (HMP-PP) to form thiamine monophosphate (TMP). This Bacillus cereus (strain B4264) protein is Thiamine-phosphate synthase.